Reading from the N-terminus, the 122-residue chain is Ribosome-binding factor A (122 aa).

The protein belongs to the RbfA family. In terms of assembly, monomer. Binds 30S ribosomal subunits, but not 50S ribosomal subunits or 70S ribosomes.

It localises to the cytoplasm. Its function is as follows. One of several proteins that assist in the late maturation steps of the functional core of the 30S ribosomal subunit. Associates with free 30S ribosomal subunits (but not with 30S subunits that are part of 70S ribosomes or polysomes). Required for efficient processing of 16S rRNA. May interact with the 5'-terminal helix region of 16S rRNA. This Burkholderia mallei (strain NCTC 10229) protein is Ribosome-binding factor A.